Reading from the N-terminus, the 416-residue chain is Probable sarcosine oxidase (416 aa).

10-40 (DVIVVGAGVMGSSAAYQLAKRGQKTLLLEQF) is a binding site for FAD. An S-8alpha-FAD cysteine modification is found at Cys325.

The protein belongs to the MSOX/MTOX family. It depends on FAD as a cofactor.

The enzyme catalyses sarcosine + O2 + H2O = formaldehyde + glycine + H2O2. This Arabidopsis thaliana (Mouse-ear cress) protein is Probable sarcosine oxidase.